We begin with the raw amino-acid sequence, 246 residues long: Large ribosomal subunit protein uL3 (246 aa).

The disordered stretch occupies residues 140–162; sequence SHRSIGSTGGRQDPGKTFKNKKM. N5-methylglutamine is present on Q151.

It belongs to the universal ribosomal protein uL3 family. As to quaternary structure, part of the 50S ribosomal subunit. Forms a cluster with proteins L14 and L19. Post-translationally, methylated by PrmB.

In terms of biological role, one of the primary rRNA binding proteins, it binds directly near the 3'-end of the 23S rRNA, where it nucleates assembly of the 50S subunit. In Methylobacterium sp. (strain 4-46), this protein is Large ribosomal subunit protein uL3.